We begin with the raw amino-acid sequence, 781 residues long: Catenin beta-1 (781 aa).

At Ala2 the chain carries N-acetylalanine. An interaction with VCL region spans residues 2 to 23 (ATQADLMELDMAMEPDRKAAVS). Ser23 is subject to Phosphoserine; by GSK3-beta; alternate. O-linked (GlcNAc) serine; alternate glycosylation is present at Ser23. Ser29 carries the phosphoserine; by GSK3-beta modification. Phosphoserine; by GSK3-beta and HIPK2 occurs at positions 33 and 37. Residues 34 to 56 (GIHSGATTTAPSLSGKGNPEEED) are disordered. Thr41 bears the Phosphothreonine; by GSK3-beta mark. Ser45 is modified (phosphoserine). N6-acetyllysine is present on Lys49. Tyr64 carries the post-translational modification Phosphotyrosine; by PTK6. Residue Tyr142 is modified to Phosphotyrosine; by FYN and PTK6. ARM repeat units lie at residues 151–191 (RAIP…IMRS), 193–234 (QMVS…IFKS), 235–276 (GGIP…VRLA), 277–318 (GGLQ…ILAS), 319–360 (GGPQ…IVEA), 361–389 (GGMQALGLHLTDPSQRLVQNCLWTLRNLS), 400–441 (GLLG…VCQV), 442–484 (GGIE…AQNA), 489–530 (YGLP…LREQ), 531–571 (GAIP…EIVE), 594–636 (NTIP…AEGA), and 637–666 (TAPLTELLHSRNEGVATYAAAVLFRMSEDK). The interaction with BCL9 stretch occupies residues 156–178 (LTKLLNDEDQVVVNKAAVMVHQL). The residue at position 191 (Ser191) is a Phosphoserine; by CDK5. Phosphoserine; by CDK5 is present on Ser246. Residues Tyr331 and Tyr333 each carry the phosphotyrosine modification. Residue Ser552 is modified to Phosphoserine; by AMPK. Residue Thr556 is modified to Phosphothreonine. Cys619 carries the S-nitrosocysteine modification. At Ser675 the chain carries Phosphoserine. A disordered region spans residues 705–781 (EPLGYRQDDP…NQLAWFDTDL (77 aa)). Basic and acidic residues predominate over residues 734–745 (MMEHEMGGHHPG). Positions 772–781 (NQLAWFDTDL) are interaction with SCRIB.

It belongs to the beta-catenin family. As to quaternary structure, two separate complex-associated pools are found in the cytoplasm. The majority is present as component of an E-cadherin/ catenin adhesion complex composed of at least E-cadherin/CDH1 and beta-catenin/CTNNB1, and possibly alpha-catenin/CTNNA1; the complex is located to adherens junctions. The stable association of CTNNA1 is controversial as CTNNA1 was shown not to bind to F-actin when assembled in the complex. Alternatively, the CTNNA1-containing complex may be linked to F-actin by other proteins such as LIMA1. Another cytoplasmic pool is part of a large complex containing AXIN1, AXIN2, APC, CSNK1A1 and GSK3B that promotes phosphorylation on N-terminal Ser and Thr residues and ubiquitination of CTNNB1 via BTRC and its subsequent degradation by the proteasome. Wnt-dependent activation of DVL antagonizes the action of GSK3B. When GSK3B activity is inhibited the complex dissociates, CTNNB1 is dephosphorylated and is no longer targeted for destruction. The stabilized protein translocates to the nucleus, where it binds TCF/LEF-1 family members, BCL9, BCL9L and possibly also RUVBL1 and CHD8. Binds CTNNBIP and EP300. CTNNB1 forms a ternary complex with LEF1 and EP300 that is disrupted by CTNNBIP1 binding. Interacts with TAX1BP3 (via the PDZ domain); this interaction inhibits the transcriptional activity of CTNNB1. Interacts with AJAP1, BAIAP1, CARM1, CTNNA3, CXADR and PCDH11Y. Binds NHERF1. Interacts with GLIS2 and SLC30A9. Interacts with XIRP1 and MUC1. Interacts with PTPRU (via the cytoplasmic juxtamembrane domain) and with EMD. Interacts with SCRIB. Interacts with TNIK. Interacts with SESTD1 and TRPC4. Interacts directly with AXIN1; the interaction is regulated by CDK2 phosphorylation of AXIN1. Interacts with CAV1. Interacts with TRPV4. The TRPV4 and CTNNB1 complex can interact with CDH1. Interacts with VCL. Interacts with PTPRJ. Interacts with PKT7. Interacts with FAT1 (via the cytoplasmic domain). Interacts with NANOS1 and NDRG2. Interacts with NEK2, CDK2 and CDK5. Interacts with PTK6. Interacts with SOX7; this interaction may lead to proteasomal degradation of active CTNNB1 and thus inhibition of Wnt/beta-catenin-stimulated transcription. Identified in a complex with HINT1 and MITF. Interacts with FHIT. The CTNNB1 and TCF4 complex interacts with PML. Interacts with FERMT2. Identified in a complex with TCF4 and FERMT2. Interacts with RORA. May interact with P-cadherin/CDH3. Interacts with RAPGEF2. Interacts with RNF220. Interacts with CTNND2. Interacts (via the C-terminal region) with CBY1. The complex composed, at least, of APC, CTNNB1 and GSK3B interacts with JPT1; the interaction requires the inactive form of GSK3B (phosphorylated at 'Ser-9'). Interacts with DLG5. Interacts with FAM53B; promoting translocation to the nucleus. Interacts with TMEM170B. Interacts with AHI1. Interacts with GID8. Component of an cadherin:catenin adhesion complex composed of at least of CDH26, beta-catenin/CTNNB1, alpha-catenin/CTNNA1 and p120 catenin/CTNND1. Forms a complex comprising APPL1, RUVBL2, APPL2, HDAC1 and HDAC2. Interacts with IRF2BPL; mediates the ubiquitination and degradation of CTNNB1. Interacts with LMBR1L and AMFR. Interacts with LMBR1L. Interacts with SOX30; prevents interaction of CTNNB1 with TCF7L2/TCF4 and leads to inhibition of Wnt signaling. Interacts with SOX9; inhibiting CTNNB1 activity by competing with the binding sites of TCF/LEF within CTNNB1, thereby inhibiting the Wnt signaling. Interacts with SPN/CD43 cytoplasmic tail. Interacts (when phosphorylated at Tyr-333) with isoform M2 of PKM (PKM2); promoting transcription activation. Interacts with PKP2 (via HEAD domain). Interacts with CDH1. Interacts (when unphosphorylated) with FLYWCH1, perhaps preventing interaction of CTNNB1 with TCF4, and thereby regulating transcription activation; phosphorylation of CTNNB1 may inhibit the interaction. Interacts (via the central armadillo domains) with probable transcriptional regulator ADNP (via N-terminal region); interaction is direct and stabilizes CTNNB1 by modulating its phosphorylation by glycogen synthase kinase-3 beta GSK3B. Interacts with NR5A2. Interacts with DSG2; the interaction promotes localization of CTNNB1 at cell junctions thus reducing its nuclear localization and subsequent transcription of CTNNB1/TCF-target genes. Post-translationally, phosphorylation by GSK3B requires prior phosphorylation of Ser-45 by another kinase. Phosphorylation proceeds then from Thr-41 to Ser-33. Phosphorylated by NEK2. EGF stimulates tyrosine phosphorylation. Phosphorylated on Ser-33 and Ser-37 by HIPK2. This phosphorylation triggers proteasomal degradation. Phosphorylation at Ser-552 by AMPK promotes stabilization of the protein, enhancing TCF/LEF-mediated transcription. Phosphorylation on Ser-191 and Ser-246 by CDK5. Phosphorylation by CDK2 regulates insulin internalization. Phosphorylation by PTK6 at Tyr-64, Tyr-142, Tyr-331 and/or Tyr-333 with the predominant site at Tyr-64 is not essential for inhibition of transcriptional activity. Phosphorylation by SRC at Tyr-333 promotes interaction with isoform M2 of PKM (PKM2); promoting transcription activation. In terms of processing, ubiquitinated by the SCF(BTRC) E3 ligase complex when phosphorylated by GSK3B, leading to its degradation. Ubiquitinated by a E3 ubiquitin ligase complex containing UBE2D1, SIAH1, CACYBP/SIP, SKP1, APC and TBL1X, leading to its subsequent proteasomal degradation. Ubiquitinated and degraded following interaction with SOX9. Ubiquitinated via 'Lys-11'- and 'Lys-29'-linked ubiquitin chains by UBR5, leading to its stabilization. S-nitrosylation at Cys-619 within adherens junctions promotes VEGF-induced, NO-dependent endothelial cell permeability by disrupting interaction with E-cadherin, thus mediating disassembly adherens junctions. Post-translationally, O-glycosylation at Ser-23 decreases nuclear localization and transcriptional activity, and increases localization to the plasma membrane and interaction with E-cadherin CDH1. In terms of processing, deacetylated at Lys-49 by SIRT1.

The protein localises to the cytoplasm. It localises to the nucleus. Its subcellular location is the cytoskeleton. The protein resides in the cell junction. It is found in the adherens junction. The protein localises to the cell membrane. It localises to the microtubule organizing center. Its subcellular location is the centrosome. The protein resides in the spindle pole. It is found in the synapse. The protein localises to the cilium basal body. Functionally, key downstream component of the canonical Wnt signaling pathway. In the absence of Wnt, forms a complex with AXIN1, AXIN2, APC, CSNK1A1 and GSK3B that promotes phosphorylation on N-terminal Ser and Thr residues and ubiquitination of CTNNB1 via BTRC and its subsequent degradation by the proteasome. In the presence of Wnt ligand, CTNNB1 is not ubiquitinated and accumulates in the nucleus, where it acts as a coactivator for transcription factors of the TCF/LEF family, leading to activate Wnt responsive genes. Also acts as a coactivator for other transcription factors, such as NR5A2. Promotes epithelial to mesenchymal transition/mesenchymal to epithelial transition (EMT/MET) via driving transcription of CTNNB1/TCF-target genes. Involved in the regulation of cell adhesion, as component of an E-cadherin:catenin adhesion complex. Acts as a negative regulator of centrosome cohesion. Involved in the CDK2/PTPN6/CTNNB1/CEACAM1 pathway of insulin internalization. Blocks anoikis of malignant kidney and intestinal epithelial cells and promotes their anchorage-independent growth by down-regulating DAPK2. Disrupts PML function and PML-NB formation by inhibiting RANBP2-mediated sumoylation of PML. Promotes neurogenesis by maintaining sympathetic neuroblasts within the cell cycle. Involved in chondrocyte differentiation via interaction with SOX9: SOX9-binding competes with the binding sites of TCF/LEF within CTNNB1, thereby inhibiting the Wnt signaling. Acts as a positive regulator of odontoblast differentiation during mesenchymal tooth germ formation, via promoting the transcription of differentiation factors such as LEF1, BMP2 and BMP4. Activity is repressed in a MSX1-mediated manner at the bell stage of mesenchymal tooth germ formation which prevents premature differentiation of odontoblasts. This chain is Catenin beta-1, found in Bos taurus (Bovine).